Here is a 129-residue protein sequence, read N- to C-terminus: Small ribosomal subunit protein uS11 (129 aa).

This sequence belongs to the universal ribosomal protein uS11 family. In terms of assembly, part of the 30S ribosomal subunit. Interacts with proteins S7 and S18. Binds to IF-3.

Located on the platform of the 30S subunit, it bridges several disparate RNA helices of the 16S rRNA. Forms part of the Shine-Dalgarno cleft in the 70S ribosome. The chain is Small ribosomal subunit protein uS11 from Staphylococcus epidermidis (strain ATCC 12228 / FDA PCI 1200).